Consider the following 157-residue polypeptide: Protein-export protein SecB (157 aa).

The protein belongs to the SecB family. Homotetramer, a dimer of dimers. One homotetramer interacts with 1 SecA dimer.

The protein localises to the cytoplasm. Functionally, one of the proteins required for the normal export of preproteins out of the cell cytoplasm. It is a molecular chaperone that binds to a subset of precursor proteins, maintaining them in a translocation-competent state. It also specifically binds to its receptor SecA. The protein is Protein-export protein SecB of Shewanella oneidensis (strain ATCC 700550 / JCM 31522 / CIP 106686 / LMG 19005 / NCIMB 14063 / MR-1).